Consider the following 752-residue polypeptide: Complement C2 (752 aa).

Positions Met1 to Ser20 are cleaved as a signal peptide. Sushi domains lie at Pro22–Pro86, Val87–Asn146, and Gly149–Gln206. 6 disulfides stabilise this stretch: Cys24/Cys64, Cys51/Cys84, Cys89/Cys131, Cys117/Cys144, Cys151/Cys191, and Cys177/Cys204. Asn29 carries an N-linked (GlcNAc...) asparagine glycan. Asn112 carries N-linked (GlcNAc...) asparagine glycosylation. The VWFA domain occupies Asn254–Met452. Residues Asp260 to Ser264 carry the MIDAS-like motif motif. Residues Ser262 and Ser264 each coordinate Mg(2+). N-linked (GlcNAc...) asparagine glycans are attached at residues Asn290 and Asn333. Position 337 (Thr337) interacts with Mg(2+). 3 disulfides stabilise this stretch: Cys463/Cys581, Cys492/Cys508, and Cys584/Cys600. The Peptidase S1 domain maps to Gly464–Gly744. Residues Asn467 and Asn471 are each glycosylated (N-linked (GlcNAc...) asparagine). Active-site charge relay system residues include His507 and Asp561. Asn621 carries an N-linked (GlcNAc...) asparagine glycan. 2 cysteine pairs are disulfide-bonded: Cys638-Cys665 and Cys675-Cys705. Ser679 (charge relay system) is an active-site residue.

It belongs to the peptidase S1 family. In terms of assembly, serine protease component of the C3 convertase, also named C4bC2b, composed of the serine protease complement C2b and complement C4b. Serine protease component of the C5 convertase, also named C4bC2bC3b, composed of the serine protease complement C2b, complement C3b, as well as complement C4b. Mg(2+) serves as cofactor. Mn(2+) is required as a cofactor. Post-translationally, cleaved and activated by different proteases depending on the complement pathway to generate complement C2a and serine protease complement C2b chains. Cleaved and activated by C1S following activation by the classical complement system. Cleaved and activated by MASP2 following activation by the lectin complement system. Cleaved and activated by GZMK following activation by the GZMK complement system.

The protein resides in the secreted. It localises to the cell surface. The enzyme catalyses Selective cleavage of Arg-|-Ser bond in complement component C3 alpha-chain to form C3a and C3b, and Arg-|-Xaa bond in complement component C5 alpha-chain to form C5a and C5b.. Its function is as follows. Precursor of the catalytic component of the C3 and C5 convertase complexes, which are part of the complement pathway, a cascade of proteins that leads to phagocytosis and breakdown of pathogens and signaling that strengthens the adaptive immune system. Component C2 is part of the classical, lectin and GZMK complement systems. Functionally, catalytic component of the complement C3 and C5 convertase complexes. Following complement activation, recruited to the surface of pathogens by complement C4b opsonin to form the C3 convertase, or C3b and C4b opsonins to form the C5 convertase. As part of the C3 convertase, cleaves and activate C3 into C3a anaphylatoxin and C3b opsonin, the next components of the complement pathways. As part of the C5 convertase, cleaves and activate C5 into C5a anaphylatoxin and C5b component of the membrane attack complex. This is Complement C2 from Pongo pygmaeus (Bornean orangutan).